A 72-amino-acid polypeptide reads, in one-letter code: uncharacterized protein (72 aa).

The helical transmembrane segment at 41–58 threads the bilayer; the sequence is FSFLVHIMCGLTLTSYVI.

It localises to the membrane. This is an uncharacterized protein from Dictyostelium discoideum (Social amoeba).